The chain runs to 2273 residues: Acetyl-CoA carboxylase, mitochondrial (2273 aa).

The transit peptide at 1-104 (KGKTITHGQS…RGNIHKHTRL (104 aa)) directs the protein to the mitochondrion. The Biotin carboxylation domain occupies 134 to 635 (VISKILIANN…STGWLDDLIL (502 aa)). Positions 292–484 (KTNFVSVPDD…LPATQLQIAM (193 aa)) constitute an ATP-grasp domain. 332-337 (GGGGKG) is an ATP binding site. R459 is a catalytic residue. Residues 763–837 (LEAELNPTQV…EAGDVIAKLT (75 aa)) form the Biotinyl-binding domain. K804 bears the N6-biotinyllysine mark. Positions 1532–1867 (PYSVKDWLQP…KRDMSPPLLE (336 aa)) constitute a CoA carboxyltransferase N-terminal domain. Positions 1532-2187 (PYSVKDWLQP…EGQVIKRLQK (656 aa)) are carboxyltransferase. CoA-binding residues include R1776, K2080, and R2082. One can recognise a CoA carboxyltransferase C-terminal domain in the interval 1871–2187 (RWDRDVDFKP…EGQVIKRLQK (317 aa)).

Biotin is required as a cofactor.

It localises to the mitochondrion. It catalyses the reaction hydrogencarbonate + acetyl-CoA + ATP = malonyl-CoA + ADP + phosphate + H(+). It carries out the reaction N(6)-biotinyl-L-lysyl-[protein] + hydrogencarbonate + ATP = N(6)-carboxybiotinyl-L-lysyl-[protein] + ADP + phosphate + H(+). It participates in lipid metabolism; malonyl-CoA biosynthesis; malonyl-CoA from acetyl-CoA: step 1/1. Its function is as follows. Catalyzes the rate-limiting reaction in the mitochondrial fatty acid synthesis (FAS) type II pathway. Responsible for the production of the mitochondrial malonyl-CoA, used for the biosynthesis of the cofactor lipoic acid. This protein carries three functions: biotin carboxyl carrier protein, biotin carboxylase, and carboxyltransferase. The sequence is that of Acetyl-CoA carboxylase, mitochondrial (HFA1) from Saccharomyces cerevisiae (strain JAY291) (Baker's yeast).